A 362-amino-acid chain; its full sequence is Acetylajmalan esterase 2 (362 aa).

The N-terminal stretch at 1 to 23 is a signal peptide; sequence MGFAARPFHIVFSLFVLAGATQA. The Nucleophile role is filled by Ser38. N-linked (GlcNAc...) asparagine glycosylation is found at Asn100, Asn118, Asn151, and Asn202. Residues Asp335 and His338 contribute to the active site.

It belongs to the 'GDSL' lipolytic enzyme family. Confined to roots.

It catalyses the reaction 17-O-acetylnorajmaline + H2O = norajmaline + acetate + H(+). The enzyme catalyses 17-O-acetylajmaline + H2O = ajmaline + acetate + H(+). Its pathway is alkaloid biosynthesis; ajmaline biosynthesis. Acetylesterase involved in the biosynthesis of ajmaline-type monoterpenoid indole alkaloids (MIAs) natural products, important plant-derived pharmaceuticals used in the therapy of heart disorders. Deacetylates 17-O-acetylnorajmaline to produce norajmaline. May also catalyze the conversion of 17-O-acetylajmaline to ajmaline. This is Acetylajmalan esterase 2 from Rauvolfia serpentina (Serpentine wood).